The primary structure comprises 884 residues: Alanine--tRNA ligase (884 aa).

Zn(2+) is bound by residues histidine 565, histidine 569, cysteine 674, and histidine 678.

Belongs to the class-II aminoacyl-tRNA synthetase family. Zn(2+) is required as a cofactor.

The protein localises to the cytoplasm. It catalyses the reaction tRNA(Ala) + L-alanine + ATP = L-alanyl-tRNA(Ala) + AMP + diphosphate. Functionally, catalyzes the attachment of alanine to tRNA(Ala) in a two-step reaction: alanine is first activated by ATP to form Ala-AMP and then transferred to the acceptor end of tRNA(Ala). Also edits incorrectly charged Ser-tRNA(Ala) and Gly-tRNA(Ala) via its editing domain. The protein is Alanine--tRNA ligase of Xanthobacter autotrophicus (strain ATCC BAA-1158 / Py2).